Here is a 270-residue protein sequence, read N- to C-terminus: tRNA pseudouridine synthase A (270 aa).

The Nucleophile role is filled by aspartate 60. Residues 107–111 (FHARF) form an RNA binding region. Tyrosine 118 is a substrate binding site. The interval 168–172 (QCQSR) is interaction with tRNA.

This sequence belongs to the tRNA pseudouridine synthase TruA family. As to quaternary structure, homodimer.

The enzyme catalyses uridine(38/39/40) in tRNA = pseudouridine(38/39/40) in tRNA. Formation of pseudouridine at positions 38, 39 and 40 in the anticodon stem and loop of transfer RNAs. The sequence is that of tRNA pseudouridine synthase A from Citrobacter koseri (strain ATCC BAA-895 / CDC 4225-83 / SGSC4696).